Consider the following 219-residue polypeptide: MNQILLSDFGTPMERVERALSALRDGRGVMVLDDENRENEGDMIFAAEKMTVEQMALTIRHGSGIVCLCITEARRQQLDLPMMVSNNTSHYGTAFTVTIEAAEGVTTGVSAQDRLTTVRAAIADDAKPGDLHRPGHVFPLRARPGGVLARRGHTEATIDLVSLAGFRPAGVLCELTNDDGTMARAPQVMAFARQHEMPVVTIEDLVAYRQAREPQEQAD.

D-ribulose 5-phosphate contacts are provided by residues 37 to 38 (RE), Asp-42, 150 to 154 (RRGHT), and Glu-174. Residue Glu-38 participates in Mg(2+) binding. His-153 contributes to the Mg(2+) binding site.

This sequence belongs to the DHBP synthase family. Homodimer. Requires Mg(2+) as cofactor. Mn(2+) is required as a cofactor.

It carries out the reaction D-ribulose 5-phosphate = (2S)-2-hydroxy-3-oxobutyl phosphate + formate + H(+). It functions in the pathway cofactor biosynthesis; riboflavin biosynthesis; 2-hydroxy-3-oxobutyl phosphate from D-ribulose 5-phosphate: step 1/1. Functionally, catalyzes the conversion of D-ribulose 5-phosphate to formate and 3,4-dihydroxy-2-butanone 4-phosphate. The protein is 3,4-dihydroxy-2-butanone 4-phosphate synthase of Edwardsiella ictaluri (strain 93-146).